Here is a 304-residue protein sequence, read N- to C-terminus: MLNKQNKLYLQAQAYWDFLRIEKQVSPHTLTNYQRQLLAISEMLIAAQIDDWQAVDASVVRWILTQSHKQGLGAKSIGLRLVVLRQWFAYLVQRHYVKVNPAVGIKAPKVARHLPKNIDAERMGQLLDVEVDEPADIRDLAMMELMYSSGLRLAELQRLDLGDMDLIDAEVRLLGKGNKERIVPIGSRALTALQAWLTVRPSFNPQDNALFLNKRGGRLSHRSIQLAMQKWGERQGLATRLHPHKLRHSFATHLLEASTDLRAVQELLGHSSLSTTQIYTHLDFQHLAKIYDASHPRARRKRED.

Residues 6 to 92 (NKLYLQAQAY…VLRQWFAYLV (87 aa)) enclose the Core-binding (CB) domain. In terms of domain architecture, Tyr recombinase spans 113-292 (HLPKNIDAER…DFQHLAKIYD (180 aa)). Catalysis depends on residues arginine 152, lysine 176, histidine 244, arginine 247, and histidine 270. The active-site O-(3'-phospho-DNA)-tyrosine intermediate is tyrosine 279.

The protein belongs to the 'phage' integrase family. XerC subfamily. As to quaternary structure, forms a cyclic heterotetrameric complex composed of two molecules of XerC and two molecules of XerD.

It is found in the cytoplasm. Functionally, site-specific tyrosine recombinase, which acts by catalyzing the cutting and rejoining of the recombining DNA molecules. The XerC-XerD complex is essential to convert dimers of the bacterial chromosome into monomers to permit their segregation at cell division. It also contributes to the segregational stability of plasmids. The sequence is that of Tyrosine recombinase XerC from Haemophilus ducreyi (strain 35000HP / ATCC 700724).